The chain runs to 124 residues: Probable glycine cleavage system H protein (124 aa).

The Lipoyl-binding domain maps to 22 to 104 (TGRVGISEFA…FGDGWLVEID (83 aa)). Lys-63 carries the N6-lipoyllysine modification.

Belongs to the GcvH family. As to quaternary structure, the glycine cleavage system is composed of four proteins: P, T, L and H. It depends on (R)-lipoate as a cofactor.

The glycine cleavage system catalyzes the degradation of glycine. The H protein shuttles the methylamine group of glycine from the P protein to the T protein. The protein is Probable glycine cleavage system H protein of Halobacterium salinarum (strain ATCC 700922 / JCM 11081 / NRC-1) (Halobacterium halobium).